The following is a 494-amino-acid chain: DDB1- and CUL4-associated factor 4 (494 aa).

The segment at 1–65 (MHQSSWKSRR…AGSSSVPDLP (65 aa)) is disordered. Residues 7–20 (KSRRHRRRGHRHSA) are compositionally biased toward basic residues. The segment covering 51–60 (STSSTAGSSS) has biased composition (low complexity). WD repeat units lie at residues 367–406 (FHDSAVTSVQILQEEQCLMASDMAGTIKLWDLRTTKCIRQ) and 409–450 (GHVN…LLRT).

Interacts with DDB1 and CUL4A.

It functions in the pathway protein modification; protein ubiquitination. Its function is as follows. May function as a substrate receptor for CUL4-DDB1 E3 ubiquitin-protein ligase complex. The sequence is that of DDB1- and CUL4-associated factor 4 (DCAF4) from Bos taurus (Bovine).